The primary structure comprises 278 residues: Nucleotide-binding protein LHK_02029 (278 aa).

8 to 15 (GLAGSGKS) is an ATP binding site. 57–60 (DTRD) lines the GTP pocket.

It belongs to the RapZ-like family.

Displays ATPase and GTPase activities. In Laribacter hongkongensis (strain HLHK9), this protein is Nucleotide-binding protein LHK_02029.